We begin with the raw amino-acid sequence, 662 residues long: Methionine--tRNA ligase (662 aa).

Residues 14–24 (YYPSGKLHLGS) carry the 'HIGH' region motif. A 'KMSKS' region motif is present at residues 308–312 (KMSKS). ATP is bound at residue Lys-311. The tRNA-binding domain maps to 559–662 (DFEKIELKVA…DDVPAGSLIG (104 aa)).

It belongs to the class-I aminoacyl-tRNA synthetase family. MetG type 2B subfamily. As to quaternary structure, homodimer.

The protein localises to the cytoplasm. The catalysed reaction is tRNA(Met) + L-methionine + ATP = L-methionyl-tRNA(Met) + AMP + diphosphate. In terms of biological role, is required not only for elongation of protein synthesis but also for the initiation of all mRNA translation through initiator tRNA(fMet) aminoacylation. The sequence is that of Methionine--tRNA ligase (metG) from Lactococcus lactis subsp. lactis (strain IL1403) (Streptococcus lactis).